The following is a 347-amino-acid chain: Extracellular metalloprotease (347 aa).

An N-terminal signal peptide occupies residues 1-20 (MKSRPICSVIPPYILHRIIA). The tract at residues 43 to 68 (SHHPRPEPHEKLPAGQANRSIHDAEQ) is disordered. H162 contributes to the Zn(2+) binding site. Residue E163 is part of the active site. Zn(2+) contacts are provided by H166 and E186. Catalysis depends on H264, which acts as the Proton donor.

Belongs to the peptidase M4 family. Ca(2+) serves as cofactor. The cofactor is Zn(2+).

The protein localises to the secreted. In Pectobacterium carotovorum subsp. carotovorum (Erwinia carotovora subsp. carotovora), this protein is Extracellular metalloprotease (prt1).